Here is a 254-residue protein sequence, read N- to C-terminus: 4-hydroxy-tetrahydrodipicolinate reductase (254 aa).

8–13 (GAFGRM) provides a ligand contact to NAD(+). Position 36 (K36) interacts with NADP(+). NAD(+) contacts are provided by residues 89 to 91 (GTT) and 115 to 118 (STNY). H147 functions as the Proton donor/acceptor in the catalytic mechanism. A (S)-2,3,4,5-tetrahydrodipicolinate-binding site is contributed by H148. Catalysis depends on K151, which acts as the Proton donor. A (S)-2,3,4,5-tetrahydrodipicolinate-binding site is contributed by 157-158 (GT).

Belongs to the DapB family.

It is found in the cytoplasm. The catalysed reaction is (S)-2,3,4,5-tetrahydrodipicolinate + NAD(+) + H2O = (2S,4S)-4-hydroxy-2,3,4,5-tetrahydrodipicolinate + NADH + H(+). It catalyses the reaction (S)-2,3,4,5-tetrahydrodipicolinate + NADP(+) + H2O = (2S,4S)-4-hydroxy-2,3,4,5-tetrahydrodipicolinate + NADPH + H(+). The protein operates within amino-acid biosynthesis; L-lysine biosynthesis via DAP pathway; (S)-tetrahydrodipicolinate from L-aspartate: step 4/4. Catalyzes the conversion of 4-hydroxy-tetrahydrodipicolinate (HTPA) to tetrahydrodipicolinate. This is 4-hydroxy-tetrahydrodipicolinate reductase from Methanospirillum hungatei JF-1 (strain ATCC 27890 / DSM 864 / NBRC 100397 / JF-1).